The sequence spans 240 residues: Uridylate cyclase (240 aa).

The Guanylate cyclase domain occupies 45–180 (TYLYADMANS…RAPNLAAKLS (136 aa)). A ribonucleoside 5'-triphosphate is bound at residue Tyr48. The Mn(2+) site is built by Asp50 and Asp94. An a ribonucleoside 5'-triphosphate-binding site is contributed by Arg95.

Belongs to the adenylyl cyclase class-4/guanylyl cyclase family. Pyrimidine cyclase subfamily. As to quaternary structure, homodimer. Mn(2+) is required as a cofactor.

Its subcellular location is the cytoplasm. It catalyses the reaction UTP = 3',5'-cyclic UMP + diphosphate. Pycsar (pyrimidine cyclase system for antiphage resistance) provides immunity against bacteriophage. The pyrimidine cyclase (PycC) synthesizes cyclic nucleotides in response to infection; these serve as specific second messenger signals. The signals activate the adjacent effector, leading to bacterial cell death and abortive phage infection. A clade B Pycsar system. Functionally, the pyrimidine cyclase gene of a two-gene Pycsar system, weakly generates cyclic UMP (cUMP) from UTP, has little to no activity on ATP, CTP or GTP. Expression of this and adjacent effector RsmPycTM (AC A0A1V0HUU2) probably confers resistance to bacteriophage. The genes are probably only expressed in response to bacteriophage infection. The chain is Uridylate cyclase from Rhodovulum sp. (strain MB263).